A 398-amino-acid polypeptide reads, in one-letter code: Vacuolar protease A (398 aa).

The N-terminal stretch at 1 to 18 is a signal peptide; that stretch reads MKSTSLLTASVLLGSASA. A propeptide spans 19–70 (activation peptide); the sequence is AVHKLKLNKVPLDEQLYTHNIDAHVRALGQKYMGIRPNVHQELLEENSLNDM. Residues 85-395 form the Peptidase A1 domain; it reads YFSEISLGTP…DLGNNAVGLA (311 aa). Asp-103 is a catalytic residue. The cysteines at positions 116 and 121 are disulfide-linked. N-linked (GlcNAc...) asparagine glycosylation occurs at Asn-138. Residue Asp-287 is part of the active site. Cys-321 and Cys-354 are disulfide-bonded. A glycan (N-linked (GlcNAc...) asparagine) is linked at Asn-338.

It belongs to the peptidase A1 family.

Its subcellular location is the vacuole lumen. It is found in the secreted. It catalyses the reaction Hydrolysis of proteins with broad specificity for peptide bonds. Cleaves -Leu-Leu-|-Val-Tyr- bond in a synthetic substrate. Does not act on esters of Tyr or Arg.. Functionally, vacuolar aspartic endopeptidase which is probably also secreted and contributes to virulence. This is Vacuolar protease A (pep2) from Aspergillus fumigatus (strain ATCC MYA-4609 / CBS 101355 / FGSC A1100 / Af293) (Neosartorya fumigata).